Consider the following 233-residue polypeptide: Outer membrane protein MIP (233 aa).

Residues 1 to 20 (MKMKLVTAAIMGLAMSTAMA) form the signal peptide. The PPIase FKBP-type domain maps to 144–233 (SDTVTVEYTG…IHLISVKKAA (90 aa)).

It belongs to the FKBP-type PPIase family.

The protein localises to the cell outer membrane. The enzyme catalyses [protein]-peptidylproline (omega=180) = [protein]-peptidylproline (omega=0). Strongly inhibited by FK506 but is completely resistant to cyclosporin A. Functionally, essential virulence factor associated with macrophage infectivity. Exhibits PPIase activity. This chain is Outer membrane protein MIP (mip), found in Legionella longbeachae.